The following is a 316-amino-acid chain: tRNA-splicing endonuclease subunit Sen34 (316 aa).

The segment at 120-184 (QAAKKQKLEQ…PGPSNGVTPL (65 aa)) is disordered. Composition is skewed to polar residues over residues 144-159 (EATQ…QPSA) and 168-181 (LDSS…SNGV). Residues tyrosine 253, histidine 261, and lysine 292 contribute to the active site.

Belongs to the tRNA-intron endonuclease family. In terms of assembly, tRNA splicing endonuclease is a heterotetramer composed of TSEN2, TSEN15, TSEN34/LENG5 and TSEN54. tRNA splicing endonuclease complex also contains proteins of the pre-mRNA 3'-end processing machinery such as CLP1, CPSF1, CPSF4 and CSTF2.

Its subcellular location is the nucleus. The protein localises to the nucleolus. The enzyme catalyses pretRNA = a 3'-half-tRNA molecule with a 5'-OH end + a 5'-half-tRNA molecule with a 2',3'-cyclic phosphate end + an intron with a 2',3'-cyclic phosphate and a 5'-hydroxyl terminus.. In terms of biological role, constitutes one of the two catalytic subunit of the tRNA-splicing endonuclease complex, a complex responsible for identification and cleavage of the splice sites in pre-tRNA. It cleaves pre-tRNA at the 5'- and 3'-splice sites to release the intron. The products are an intron and two tRNA half-molecules bearing 2',3'-cyclic phosphate and 5'-OH termini. There are no conserved sequences at the splice sites, but the intron is invariably located at the same site in the gene, placing the splice sites an invariant distance from the constant structural features of the tRNA body. The tRNA splicing endonuclease is also involved in mRNA processing via its association with pre-mRNA 3'-end processing factors, establishing a link between pre-tRNA splicing and pre-mRNA 3'-end formation, suggesting that the endonuclease subunits function in multiple RNA-processing events. The protein is tRNA-splicing endonuclease subunit Sen34 (Tsen34) of Mus musculus (Mouse).